A 369-amino-acid polypeptide reads, in one-letter code: DNA replication and repair protein RecF (369 aa).

30-37 (GRNAQGKT) provides a ligand contact to ATP.

This sequence belongs to the RecF family.

It is found in the cytoplasm. Functionally, the RecF protein is involved in DNA metabolism; it is required for DNA replication and normal SOS inducibility. RecF binds preferentially to single-stranded, linear DNA. It also seems to bind ATP. This is DNA replication and repair protein RecF from Streptococcus agalactiae serotype Ia (strain ATCC 27591 / A909 / CDC SS700).